The primary structure comprises 233 residues: Large ribosomal subunit protein uL1 (233 aa).

It belongs to the universal ribosomal protein uL1 family. In terms of assembly, part of the 50S ribosomal subunit.

In terms of biological role, binds directly to 23S rRNA. The L1 stalk is quite mobile in the ribosome, and is involved in E site tRNA release. Its function is as follows. Protein L1 is also a translational repressor protein, it controls the translation of the L11 operon by binding to its mRNA. This chain is Large ribosomal subunit protein uL1, found in Aeromonas hydrophila subsp. hydrophila (strain ATCC 7966 / DSM 30187 / BCRC 13018 / CCUG 14551 / JCM 1027 / KCTC 2358 / NCIMB 9240 / NCTC 8049).